The sequence spans 338 residues: Glycerol-3-phosphate dehydrogenase [NAD(P)+] (338 aa).

3 residues coordinate NADPH: tryptophan 14, tyrosine 50, and lysine 110. Residues lysine 110, glycine 141, and serine 143 each coordinate sn-glycerol 3-phosphate. Residue alanine 145 coordinates NADPH. Residues lysine 196, aspartate 249, serine 259, arginine 260, and asparagine 261 each contribute to the sn-glycerol 3-phosphate site. The active-site Proton acceptor is lysine 196. Residue arginine 260 coordinates NADPH. Residue glutamate 285 coordinates NADPH.

This sequence belongs to the NAD-dependent glycerol-3-phosphate dehydrogenase family.

It is found in the cytoplasm. The catalysed reaction is sn-glycerol 3-phosphate + NAD(+) = dihydroxyacetone phosphate + NADH + H(+). The enzyme catalyses sn-glycerol 3-phosphate + NADP(+) = dihydroxyacetone phosphate + NADPH + H(+). It participates in membrane lipid metabolism; glycerophospholipid metabolism. Functionally, catalyzes the reduction of the glycolytic intermediate dihydroxyacetone phosphate (DHAP) to sn-glycerol 3-phosphate (G3P), the key precursor for phospholipid synthesis. In Malacoplasma penetrans (strain HF-2) (Mycoplasma penetrans), this protein is Glycerol-3-phosphate dehydrogenase [NAD(P)+].